The chain runs to 225 residues: Cytidylate kinase (225 aa).

Position 12-20 (12-20 (GPSGAGKGT)) interacts with ATP.

This sequence belongs to the cytidylate kinase family. Type 1 subfamily.

It is found in the cytoplasm. It catalyses the reaction CMP + ATP = CDP + ADP. The catalysed reaction is dCMP + ATP = dCDP + ADP. The sequence is that of Cytidylate kinase from Stenotrophomonas maltophilia (strain R551-3).